The primary structure comprises 240 residues: Uridylate kinase (240 aa).

12–15 (KLSG) provides a ligand contact to ATP. The tract at residues 20–25 (GDQGKG) is involved in allosteric activation by GTP. A UMP-binding site is contributed by Gly-54. ATP contacts are provided by Gly-55 and Arg-59. Residues Asp-74 and 135–142 (TGSPYFST) each bind UMP. Positions 163, 169, and 172 each coordinate ATP.

This sequence belongs to the UMP kinase family. In terms of assembly, homohexamer.

The protein localises to the cytoplasm. The enzyme catalyses UMP + ATP = UDP + ADP. Its pathway is pyrimidine metabolism; CTP biosynthesis via de novo pathway; UDP from UMP (UMPK route): step 1/1. Its activity is regulated as follows. Allosterically activated by GTP. Inhibited by UTP. Its function is as follows. Catalyzes the reversible phosphorylation of UMP to UDP. In Ligilactobacillus salivarius (strain UCC118) (Lactobacillus salivarius), this protein is Uridylate kinase.